The sequence spans 267 residues: 5'-nucleotidase SurE (267 aa).

The a divalent metal cation site is built by aspartate 14, aspartate 15, serine 45, and asparagine 100.

This sequence belongs to the SurE nucleotidase family. A divalent metal cation serves as cofactor.

It localises to the cytoplasm. It carries out the reaction a ribonucleoside 5'-phosphate + H2O = a ribonucleoside + phosphate. In terms of biological role, nucleotidase that shows phosphatase activity on nucleoside 5'-monophosphates. The sequence is that of 5'-nucleotidase SurE from Methanosarcina acetivorans (strain ATCC 35395 / DSM 2834 / JCM 12185 / C2A).